The following is a 718-amino-acid chain: Exostosin-2 (718 aa).

Over 1 to 25 (MCASVKSNIRGPALIPRMKTKHRIY) the chain is Cytoplasmic. The chain crosses the membrane as a helical; Signal-anchor for type II membrane protein span at residues 26-46 (YVTLFSIVLLGLIATGMFQFW). Residues 47–718 (PHSIESSSDG…LKSFPNIGSL (672 aa)) lie on the Lumenal side of the membrane. Disulfide bonds link cysteine 85–cysteine 90, cysteine 96–cysteine 151, cysteine 286–cysteine 300, and cysteine 318–cysteine 339. N-linked (GlcNAc...) asparagine glycosylation occurs at asparagine 288. UDP contacts are provided by leucine 461, arginine 465, asparagine 490, and asparagine 517. The UDP-N-acetyl-alpha-D-glucosamine site is built by arginine 465, asparagine 490, asparagine 517, arginine 522, aspartate 538, aspartate 539, and aspartate 540. 2 residues coordinate UDP: aspartate 538 and aspartate 539. A Mn(2+)-binding site is contributed by aspartate 540. Positions 582 and 584 each coordinate a protein. Cysteine 626 and cysteine 676 are disulfide-bonded. Residues glutamate 627 and aspartate 628 each coordinate UDP-N-acetyl-alpha-D-glucosamine. Asparagine 637 carries N-linked (GlcNAc...) asparagine glycosylation. 2 residues coordinate a protein: lysine 651 and lysine 653. Arginine 673 serves as a coordination point for UDP-N-acetyl-alpha-D-glucosamine.

Belongs to the glycosyltransferase 47 family. Part of the heparan sulfate polymerase, a dimeric complex composed of EXT1 and EXT2. Could also form homooligomeric complexes. Interacts with NDST1. Interacts with GALNT5. Mn(2+) serves as cofactor. N-glycosylated at Asn-637. Post-translationally, a soluble form is generated by proteolytic processing. In terms of tissue distribution, expressed in heart, brain, spleen, lung, liver, skeletal muscle and testis. Heart shows a high expression.

It localises to the golgi apparatus membrane. Its subcellular location is the golgi apparatus. It is found in the cis-Golgi network membrane. The protein localises to the endoplasmic reticulum membrane. The protein resides in the secreted. The enzyme catalyses 3-O-{[(1-&gt;4)-beta-D-GlcA-(1-&gt;4)-alpha-D-GlcNAc](n)-(1-&gt;4)-beta-D-GlcA-(1-&gt;3)-beta-D-Gal-(1-&gt;3)-beta-D-Gal-(1-&gt;4)-beta-D-Xyl}-L-seryl-[protein] + UDP-N-acetyl-alpha-D-glucosamine = 3-O-{alpha-D-GlcNAc-[(1-&gt;4)-beta-D-GlcA-(1-&gt;4)-alpha-D-GlcNAc](n)-(1-&gt;4)-beta-D-GlcA-(1-&gt;3)-beta-D-Gal-(1-&gt;3)-beta-D-Gal-(1-&gt;4)-beta-D-Xyl}-L-seryl-[protein] + UDP + H(+). The protein operates within protein modification; protein glycosylation. In terms of biological role, glycosyltransferase forming with EXT1 the heterodimeric heparan sulfate polymerase which catalyzes the elongation of the heparan sulfate glycan backbone. Glycan backbone extension consists in the alternating transfer of (1-&gt;4)-beta-D-GlcA and (1-&gt;4)-alpha-D-GlcNAc residues from their respective UDP-sugar donors. Both EXT1 and EXT2 are required for the full activity of the polymerase since EXT1 bears the N-acetylglucosaminyl-proteoglycan 4-beta-glucuronosyltransferase activity within the complex while EXT2 carries the glucuronosyl-N-acetylglucosaminyl-proteoglycan 4-alpha-N-acetylglucosaminyltransferase activity. Heparan sulfate proteoglycans are ubiquitous components of the extracellular matrix and play an important role in tissue homeostasis and signaling. The chain is Exostosin-2 from Mus musculus (Mouse).